Reading from the N-terminus, the 42-residue chain is Cytochrome b559 subunit beta (42 aa).

Residues 17–33 (WLTIHALAVPTVFFLGA) traverse the membrane as a helical segment. Histidine 21 is a binding site for heme.

It belongs to the PsbE/PsbF family. Heterodimer of an alpha subunit and a beta subunit. PSII is composed of 1 copy each of membrane proteins PsbA, PsbB, PsbC, PsbD, PsbE, PsbF, PsbH, PsbI, PsbJ, PsbK, PsbL, PsbM, PsbT, PsbX, PsbY, PsbZ, Psb30/Ycf12, at least 3 peripheral proteins of the oxygen-evolving complex and a large number of cofactors. It forms dimeric complexes. The cofactor is heme b.

Its subcellular location is the plastid. It is found in the chloroplast thylakoid membrane. Its function is as follows. This b-type cytochrome is tightly associated with the reaction center of photosystem II (PSII). PSII is a light-driven water:plastoquinone oxidoreductase that uses light energy to abstract electrons from H(2)O, generating O(2) and a proton gradient subsequently used for ATP formation. It consists of a core antenna complex that captures photons, and an electron transfer chain that converts photonic excitation into a charge separation. This chain is Cytochrome b559 subunit beta, found in Emiliania huxleyi (Coccolithophore).